We begin with the raw amino-acid sequence, 29 residues long: MDIVSIAWAALMVVFSFSLSLVVWGRSGL.

Residues 3 to 23 form a helical membrane-spanning segment; it reads IVSIAWAALMVVFSFSLSLVV.

It belongs to the PetN family. The 4 large subunits of the cytochrome b6-f complex are cytochrome b6, subunit IV (17 kDa polypeptide, PetD), cytochrome f and the Rieske protein, while the 4 small subunits are PetG, PetL, PetM and PetN. The complex functions as a dimer.

The protein localises to the plastid. The protein resides in the chloroplast thylakoid membrane. Component of the cytochrome b6-f complex, which mediates electron transfer between photosystem II (PSII) and photosystem I (PSI), cyclic electron flow around PSI, and state transitions. This chain is Cytochrome b6-f complex subunit 8, found in Phaseolus vulgaris (Kidney bean).